A 491-amino-acid chain; its full sequence is Serine/threonine-protein kinase 33 (491 aa).

A disordered region spans residues phenylalanine 51–serine 89. Residues glutamine 54–proline 82 show a composition bias toward basic and acidic residues. The Protein kinase domain maps to tyrosine 111–leucine 377. Residues leucine 117–valine 125 and lysine 140 contribute to the ATP site. Aspartate 233 acts as the Proton acceptor in catalysis. The segment at lysine 398–leucine 491 is disordered. The span at glutamate 402 to glutamate 414 shows a compositional bias: acidic residues. Serine 403 carries the post-translational modification Phosphoserine. Positions glutamine 415 to asparagine 431 are enriched in polar residues. Positions serine 445 to glutamate 457 are enriched in low complexity. Positions alanine 475–leucine 484 are enriched in polar residues.

The protein belongs to the protein kinase superfamily. CAMK Ser/Thr protein kinase family. CaMK subfamily. In terms of assembly, homodimer. Autophosphorylated. In terms of tissue distribution, highly expressed in testis, particularly in cells from the spermatogenic epithelia. Present in meiotic and post meiotic sperm cells. Significant expression is detected in lung epithelia, alveolar macrophages, horizontal cells in the retina and in embryonic organs such as heart, brain and spinal cord. Also expressed in pituitary gland, kidney, pancreas, trachea and thyroid gland.

The protein resides in the cytoplasm. It is found in the cytoskeleton. The protein localises to the perinuclear region. The catalysed reaction is L-seryl-[protein] + ATP = O-phospho-L-seryl-[protein] + ADP + H(+). It carries out the reaction L-threonyl-[protein] + ATP = O-phospho-L-threonyl-[protein] + ADP + H(+). With respect to regulation, specifically inhibited by CDD-2807 ((3-([1,1'-Biphenyl]-2-ylethynyl)-1H-indazol-5-yl)(2,6-diazaspiro[3.5]nonan-2-yl)methanone). CDD-2807 is a potential male contraceptive drug: it is not toxic, efficiently crosses the blood-testis barrier and induces a reversible contraceptive effect in male mice. Its function is as follows. Serine/threonine protein kinase required for spermatid differentiation and male fertility. Promotes sperm flagella assembly during spermatogenesis by mediating phosphorylation of fibrous sheath proteins AKAP3 and AKAP4. Also phosphorylates vimentin/VIM, thereby regulating the dynamic behavior of the intermediate filament cytoskeleton. The chain is Serine/threonine-protein kinase 33 from Mus musculus (Mouse).